Consider the following 132-residue polypeptide: Holo-[acyl-carrier-protein] synthase (132 aa).

Residues Asp8 and Glu57 each coordinate Mg(2+).

This sequence belongs to the P-Pant transferase superfamily. AcpS family. Mg(2+) serves as cofactor.

It localises to the cytoplasm. It catalyses the reaction apo-[ACP] + CoA = holo-[ACP] + adenosine 3',5'-bisphosphate + H(+). Functionally, transfers the 4'-phosphopantetheine moiety from coenzyme A to a Ser of acyl-carrier-protein. The chain is Holo-[acyl-carrier-protein] synthase from Methylobacterium nodulans (strain LMG 21967 / CNCM I-2342 / ORS 2060).